The chain runs to 393 residues: Phospholipase A1-II 1 (393 aa).

The stretch at 200–220 (QVLNEIKRLQDMYEHEETSIT) forms a coiled coil. Residue serine 225 is the Acyl-ester intermediate of the active site. Residues serine 225, aspartate 284, and histidine 321 each act as charge relay system in the active site.

Belongs to the AB hydrolase superfamily. Lipase family.

The protein resides in the cytoplasm. In terms of biological role, acylhydrolase that catalyzes the hydrolysis of phospholipids at the sn-1 position. This Oryza sativa subsp. indica (Rice) protein is Phospholipase A1-II 1.